The primary structure comprises 287 residues: O-ureido-serine racemase (287 aa).

Substrate is bound at residue Asn20. Cys81 acts as the Proton donor in catalysis. Substrate-binding positions include 82 to 83 (GN), Asn167, Asn200, and 218 to 219 (EY). Catalysis depends on Cys227, which acts as the Proton acceptor. 228–229 (GS) lines the substrate pocket.

It belongs to the diaminopimelate epimerase family. In terms of assembly, monomer.

Its subcellular location is the cytoplasm. It catalyses the reaction O-ureido-L-serine = O-ureido-D-serine. Inhibited by thiol-inactivating reagents such as iodoacetamide and Hg(2+) ions. Involved in the biosynthesis of the antibiotic D-cycloserine (DCS), a cyclic structural analog of D-alanine, used as an antitubercular agent. Catalyzes the stereoinversion of O-ureido-L-serine to O-ureido-D-serine. In Streptomyces lavendulae, this protein is O-ureido-serine racemase.